A 253-amino-acid polypeptide reads, in one-letter code: REF/SRPP-like protein Os05g0151300/LOC_Os05g05940 (253 aa).

The disordered stretch occupies residues 1–26 (MADSGSDAPISNRPEEEVTVEKTPEM). The span at 13–26 (RPEEEVTVEKTPEM) shows a compositional bias: basic and acidic residues.

It belongs to the REF/SRPP family.

In Oryza sativa subsp. japonica (Rice), this protein is REF/SRPP-like protein Os05g0151300/LOC_Os05g05940.